A 207-amino-acid chain; its full sequence is Cyclic di-AMP synthase CdaS (207 aa).

A coiled-coil region spans residues 13 to 37; it reads AFKGKIQVYLEQILGDASLILKTLH. The region spanning 63-205 is the DAC domain; the sequence is SFYLQSYIEE…DGVLYPLISP (143 aa).

It belongs to the adenylate cyclase family. DacB/CdaS subfamily. As to quaternary structure, forms dimers and probably also hexamers; the dimer may be active while the hexamer may not be active.

It carries out the reaction 2 ATP = 3',3'-c-di-AMP + 2 diphosphate. One of 3 paralogous diadenylate cyclases (DAC) in this bacteria, catalyzing the condensation of 2 ATP molecules into cyclic di-AMP (c-di-AMP). Upon expression in E.coli leads to c-di-AMP synthesis. Overexpression of the hyperactive mutant (L44F) in the absence of c-di-AMP phosphodiesterase GdpP leads to growth defects in log phase (long curly cell filaments) that disappear upon sporulation; spore formation is normal, showing sporulation is insensitive to the excess c-di-AMP. In B.subtilis c-di-AMP is a second messenger that mediates growth, DNA repair and cell wall homeostasis; it is toxic when present in excess. This is Cyclic di-AMP synthase CdaS from Bacillus subtilis (strain 168).